The primary structure comprises 177 residues: MTTIVSVRRNGKVVMGGDGQVSLGNTVMKGNAKKVRRLYHGQVLAGFAGATADAFTLFERFEQQLEKHQGHLVRAAVELAKDWRTDRSLSRLEAMLAVANKDASLIITGNGDVVEPEHGLIAMGSGGGFAQAAALALLQHNAELSAREVAETALNIAGSICVFTNQNLTIEELDSAV.

Threonine 2 is a catalytic residue. Residues glycine 158, cysteine 161, and threonine 164 each contribute to the Na(+) site.

It belongs to the peptidase T1B family. HslV subfamily. In terms of assembly, a double ring-shaped homohexamer of HslV is capped on each side by a ring-shaped HslU homohexamer. The assembly of the HslU/HslV complex is dependent on binding of ATP.

Its subcellular location is the cytoplasm. The enzyme catalyses ATP-dependent cleavage of peptide bonds with broad specificity.. Its activity is regulated as follows. Allosterically activated by HslU binding. Protease subunit of a proteasome-like degradation complex believed to be a general protein degrading machinery. This chain is ATP-dependent protease subunit HslV, found in Pseudomonas aeruginosa (strain LESB58).